We begin with the raw amino-acid sequence, 443 residues long: Probable D-serine dehydratase (443 aa).

Lys116 is subject to N6-(pyridoxal phosphate)lysine.

It belongs to the serine/threonine dehydratase family. DsdA subfamily. Requires pyridoxal 5'-phosphate as cofactor.

The enzyme catalyses D-serine = pyruvate + NH4(+). The sequence is that of Probable D-serine dehydratase from Bacillus cereus (strain AH187).